The sequence spans 124 residues: Conotoxin Cl14.12 (124 aa).

The N-terminal stretch at 1–17 is a signal peptide; sequence MKVAVVLLVSLLAVTYA. Residues 18–74 constitute a propeptide that is removed on maturation; it reads LPEKRIFFGGIVDKVKDTFTKIFNKAKETFDKITDGFDVDFDEVVDKLIAQIHSTPT.

Contains 2 disulfide bond. Expressed by the venom duct.

The protein resides in the secreted. The chain is Conotoxin Cl14.12 from Californiconus californicus (California cone).